Here is a 180-residue protein sequence, read N- to C-terminus: Small ribosomal subunit protein bS16 (180 aa).

It belongs to the bacterial ribosomal protein bS16 family.

The polypeptide is Small ribosomal subunit protein bS16 (Flavobacterium psychrophilum (strain ATCC 49511 / DSM 21280 / CIP 103535 / JIP02/86)).